Consider the following 876-residue polypeptide: Alanine--tRNA ligase (876 aa).

Residues histidine 568, histidine 572, cysteine 670, and histidine 674 each contribute to the Zn(2+) site.

Belongs to the class-II aminoacyl-tRNA synthetase family. Zn(2+) serves as cofactor.

The protein resides in the cytoplasm. It catalyses the reaction tRNA(Ala) + L-alanine + ATP = L-alanyl-tRNA(Ala) + AMP + diphosphate. In terms of biological role, catalyzes the attachment of alanine to tRNA(Ala) in a two-step reaction: alanine is first activated by ATP to form Ala-AMP and then transferred to the acceptor end of tRNA(Ala). Also edits incorrectly charged Ser-tRNA(Ala) and Gly-tRNA(Ala) via its editing domain. In Anaplasma phagocytophilum (strain HZ), this protein is Alanine--tRNA ligase.